The chain runs to 531 residues: Zinc finger CCCH-type with G patch domain-containing protein (531 aa).

Position 1 is an N-acetylmethionine (Met-1). Residues 91 to 133 are disordered; that stretch reads EAPAAARGSGSETVPKAEAGPESAAGGQEEEEGEDEEELSGTK. Residues 107–117 are compositionally biased toward low complexity; it reads AEAGPESAAGG. The segment covering 118 to 129 has biased composition (acidic residues); the sequence is QEEEEGEDEEEL. A C3H1-type zinc finger spans residues 175-201; it reads KSLKPCPFFLEGKCRFKENCRFSHGQV. Residues 267-289 form a disordered region; that stretch reads PPLRTEATESDSDSDGTGDSSYA. The 47-residue stretch at 333-379 folds into the G-patch domain; it reads TRGIGSRLLTKMGYEFGKGLGRHAEGRVEPIHAVVLPRGKSLDQCVE. Ser-373 bears the Phosphoserine mark. Disordered regions lie at residues 385–409, 426–446, and 509–531; these read TRVG…GGRP, APGA…DMYH, and RAQE…MTEF. A compositionally biased stretch (low complexity) spans 426-438; the sequence is APGALEAGAAPAG. The segment covering 518–531 has biased composition (basic and acidic residues); it reads EQRKADTHKKMTEF.

As to quaternary structure, interacts with CHD4/Mi-2; the interaction is direct. In terms of processing, ubiquitinated in case of infection by HIV-1, leading to its degradation. Ubiquitination is mediated by the CUL4A-RBX1-DDB1-DCAF1/VPRBP complex that is hijacked by HIV-1 via interaction between HIV-1 Vpr and DCAF1/VPRBP. As to expression, widely expressed.

The protein resides in the nucleus. Functionally, transcription repressor that specifically binds the 5'-GGAG[GA]A[GA]A-3' consensus sequence. Represses transcription by recruiting the chromatin multiprotein complex NuRD to target promoters. Negatively regulates expression of EGFR, a gene involved in cell proliferation, survival and migration. Its ability to repress genes of the EGFR pathway suggest it may act as a tumor suppressor. Able to suppress breast carcinogenesis. Its function is as follows. Antagonizes the transcription repression by isoform 1 by competing for the binding of the NuRD complex. Does not bind DNA. In Homo sapiens (Human), this protein is Zinc finger CCCH-type with G patch domain-containing protein (ZGPAT).